Consider the following 299-residue polypeptide: Oxygen-dependent coproporphyrinogen-III oxidase (299 aa).

Ser92 is a binding site for substrate. 2 residues coordinate a divalent metal cation: His96 and His106. His106 acts as the Proton donor in catalysis. A substrate-binding site is contributed by 108–110 (NVR). His145 and His175 together coordinate a divalent metal cation. The tract at residues 240–275 (YVEFNLVWDRGTLFGLQTGGRTESILMSMPPLVRWE) is important for dimerization. Position 258–260 (258–260 (GGR)) interacts with substrate.

It belongs to the aerobic coproporphyrinogen-III oxidase family. As to quaternary structure, homodimer. A divalent metal cation is required as a cofactor.

It is found in the cytoplasm. It catalyses the reaction coproporphyrinogen III + O2 + 2 H(+) = protoporphyrinogen IX + 2 CO2 + 2 H2O. It participates in porphyrin-containing compound metabolism; protoporphyrin-IX biosynthesis; protoporphyrinogen-IX from coproporphyrinogen-III (O2 route): step 1/1. Involved in the heme biosynthesis. Catalyzes the aerobic oxidative decarboxylation of propionate groups of rings A and B of coproporphyrinogen-III to yield the vinyl groups in protoporphyrinogen-IX. This chain is Oxygen-dependent coproporphyrinogen-III oxidase, found in Citrobacter koseri (strain ATCC BAA-895 / CDC 4225-83 / SGSC4696).